Here is a 244-residue protein sequence, read N- to C-terminus: 1-(5-phosphoribosyl)-5-[(5-phosphoribosylamino)methylideneamino] imidazole-4-carboxamide isomerase (244 aa).

The Proton acceptor role is filled by aspartate 9. The Proton donor role is filled by aspartate 131.

Belongs to the HisA/HisF family.

Its subcellular location is the cytoplasm. It carries out the reaction 1-(5-phospho-beta-D-ribosyl)-5-[(5-phospho-beta-D-ribosylamino)methylideneamino]imidazole-4-carboxamide = 5-[(5-phospho-1-deoxy-D-ribulos-1-ylimino)methylamino]-1-(5-phospho-beta-D-ribosyl)imidazole-4-carboxamide. It participates in amino-acid biosynthesis; L-histidine biosynthesis; L-histidine from 5-phospho-alpha-D-ribose 1-diphosphate: step 4/9. In Campylobacter jejuni subsp. doylei (strain ATCC BAA-1458 / RM4099 / 269.97), this protein is 1-(5-phosphoribosyl)-5-[(5-phosphoribosylamino)methylideneamino] imidazole-4-carboxamide isomerase.